Reading from the N-terminus, the 216-residue chain is Large ribosomal subunit protein uL24m (216 aa).

The transit peptide at Met-1–Leu-9 directs the protein to the mitochondrion. Residue Ser-24 is modified to Phosphoserine. The KOW domain occupies Leu-56 to Gly-89.

This sequence belongs to the universal ribosomal protein uL24 family. As to quaternary structure, component of the mitochondrial large ribosomal subunit (mt-LSU). Mature mammalian 55S mitochondrial ribosomes consist of a small (28S) and a large (39S) subunit. The 28S small subunit contains a 12S ribosomal RNA (12S mt-rRNA) and 30 different proteins. The 39S large subunit contains a 16S rRNA (16S mt-rRNA), a copy of mitochondrial valine transfer RNA (mt-tRNA(Val)), which plays an integral structural role, and 52 different proteins.

The protein resides in the mitochondrion. The polypeptide is Large ribosomal subunit protein uL24m (MRPL24) (Homo sapiens (Human)).